The chain runs to 646 residues: Alkyl/aryl-sulfatase BDS1 (646 aa).

Position 1 is an N-acetylmethionine (Met1). Zn(2+) is bound by residues His162, His164, Asp166, His167, Glu273, Glu292, and His337.

The protein belongs to the metallo-beta-lactamase superfamily. Type III sulfatase family. Zn(2+) serves as cofactor.

Alkyl/aryl-sulfatase. Enables the use of SDS and 4-nitrocatechol as sulfur source. The polypeptide is Alkyl/aryl-sulfatase BDS1 (BDS1) (Saccharomyces cerevisiae (strain ATCC 204508 / S288c) (Baker's yeast)).